The sequence spans 511 residues: Apolipoprotein N-acyltransferase (511 aa).

The next 6 helical transmembrane spans lie at 7–25, 58–78, 90–110, 125–145, 163–183, and 192–212; these read PGWPGHLLALAAGALTPLA, GWWYGFGAFGAGTSWIYVSIH, FLMLGFTAGVAFFFALPAWLW, LAFAALWLALELFRSWFLTGF, VPVGGVWLSSFVIALSAALLV, and GASLLLALVLLLGPWAAGLYL. In terms of domain architecture, CN hydrolase spans 230 to 470; sequence IQGNIAQELK…QGILRGEVIP (241 aa). Glu269 functions as the Proton acceptor in the catalytic mechanism. Lys330 is an active-site residue. The active-site Nucleophile is the Cys382. A helical transmembrane segment spans residues 478 to 498; sequence LQYRVWPLAGLAGVLLLWALL.

This sequence belongs to the CN hydrolase family. Apolipoprotein N-acyltransferase subfamily.

Its subcellular location is the cell inner membrane. The catalysed reaction is N-terminal S-1,2-diacyl-sn-glyceryl-L-cysteinyl-[lipoprotein] + a glycerophospholipid = N-acyl-S-1,2-diacyl-sn-glyceryl-L-cysteinyl-[lipoprotein] + a 2-acyl-sn-glycero-3-phospholipid + H(+). It functions in the pathway protein modification; lipoprotein biosynthesis (N-acyl transfer). Catalyzes the phospholipid dependent N-acylation of the N-terminal cysteine of apolipoprotein, the last step in lipoprotein maturation. The polypeptide is Apolipoprotein N-acyltransferase (Pseudomonas paraeruginosa (strain DSM 24068 / PA7) (Pseudomonas aeruginosa (strain PA7))).